Reading from the N-terminus, the 165-residue chain is Transmembrane protein 253 (165 aa).

Transmembrane regions (helical) follow at residues Leu31–Val51, Met60–Leu80, and Leu91–Val111. The interval Glu145–Gln165 is disordered. A compositionally biased stretch (polar residues) spans Thr155–Gln165.

The protein localises to the membrane. This Bos taurus (Bovine) protein is Transmembrane protein 253 (TMEM253).